A 249-amino-acid polypeptide reads, in one-letter code: Uroplakin-3b-like protein 1 (249 aa).

Residues 1 to 26 (MGPHGKQSVLRMPLLLLLTCVQSGTG) form the signal peptide. At 27–194 (LESINYAPQL…PGSQGKGTVV (168 aa)) the chain is on the extracellular side. N-linked (GlcNAc...) asparagine glycosylation is found at asparagine 63, asparagine 82, and asparagine 133. The helical transmembrane segment at 195–215 (IIAFLSILLAILLVVFLVLVI) threads the bilayer. The Cytoplasmic segment spans residues 216–249 (SACLSTSGSSPEEQVRMRHYHTHHMGSLRAERSS).

The protein belongs to the uroplakin-3 family.

It is found in the membrane. The chain is Uroplakin-3b-like protein 1 from Mus musculus (Mouse).